A 152-amino-acid chain; its full sequence is Large-conductance mechanosensitive channel (152 aa).

Transmembrane regions (helical) follow at residues 14–34 (VVDMAVGIILGVAFGAIVKSL), 39–59 (LMPGIGILLGSADFSNLFLVI), and 85–105 (GLFINTIVNFIIVAFALFLVI).

This sequence belongs to the MscL family. In terms of assembly, homopentamer.

Its subcellular location is the cell inner membrane. Functionally, channel that opens in response to stretch forces in the membrane lipid bilayer. May participate in the regulation of osmotic pressure changes within the cell. The protein is Large-conductance mechanosensitive channel of Syntrophus aciditrophicus (strain SB).